A 143-amino-acid chain; its full sequence is 3-dehydroquinate dehydratase (143 aa).

The active-site Proton acceptor is the Y22. Residues N73, H79, and D86 each coordinate substrate. Catalysis depends on H99, which acts as the Proton donor. Substrate-binding positions include 100-101 (LS) and R110.

This sequence belongs to the type-II 3-dehydroquinase family. As to quaternary structure, homododecamer.

It carries out the reaction 3-dehydroquinate = 3-dehydroshikimate + H2O. It participates in metabolic intermediate biosynthesis; chorismate biosynthesis; chorismate from D-erythrose 4-phosphate and phosphoenolpyruvate: step 3/7. Its function is as follows. Catalyzes a trans-dehydration via an enolate intermediate. This Salinispora tropica (strain ATCC BAA-916 / DSM 44818 / JCM 13857 / NBRC 105044 / CNB-440) protein is 3-dehydroquinate dehydratase.